The chain runs to 77 residues: Putative defensin-like protein 60 (77 aa).

The N-terminal stretch at 1–25 is a signal peptide; the sequence is MKMNITKSYVILFLVVVMTNSLSNS. 4 cysteine pairs are disulfide-bonded: Cys-41–Cys-75, Cys-45–Cys-68, Cys-54–Cys-73, and Cys-58–Cys-74.

It belongs to the DEFL family.

It is found in the secreted. The chain is Putative defensin-like protein 60 from Arabidopsis thaliana (Mouse-ear cress).